We begin with the raw amino-acid sequence, 311 residues long: Protein MGF 360-16R (311 aa).

The protein belongs to the asfivirus MGF 360 family.

Plays a role in virus cell tropism, and may be required for efficient virus replication in macrophages. The sequence is that of Protein MGF 360-16R from African swine fever virus (strain Badajoz 1971 Vero-adapted) (Ba71V).